A 411-amino-acid chain; its full sequence is Protrudin (411 aa).

The segment at 1-27 (MQTSEREGSGPELSPSVMPEAPLESPP) is disordered. The Cytoplasmic segment spans residues 1 to 66 (MQTSEREGSG…AGDGVRYLLR (66 aa)). Positions 1–92 (MQTSEREGSG…LFLTLNEGAW (92 aa)) are sufficient for homooligomerization. Residues 1–205 (MQTSEREGSG…LYLLPLCWVL (205 aa)) form a sufficient for localization to endoplasmic reticulum tubular network and for interactions with REEP1, REEP5, ATL1, ATL2, ATL3 and SPAST region. A necessary for interaction with RAB11A and function in neurite outgrowth region spans residues 51–64 (LEPLKDAGDGVRYL). A helical transmembrane segment spans residues 67–87 (WQMPLCSLLTCLGLNVLFLTL). Residue Asn88 is a topological domain, lumenal. Residues 89 to 109 (EGAWYSVGALMISVPALLGYL) form a helical membrane-spanning segment. The Cytoplasmic segment spans residues 110–187 (QEVCRARLPE…NPVVSSQFYG (78 aa)). An intramembrane region (helical) is located at residues 188–208 (ALLGTICMLYLLPLCWVLTLL). Residues 209-411 (NSTLFLGNVE…CASCNQTLSK (203 aa)) lie on the Cytoplasmic side of the membrane. Residues 234-286 (MNPKQEEHAFESPPPPDVGGKGGLMDSTPALTPTEDLTPGSVEEAEEAEPDEE) are disordered. The tract at residues 271 to 361 (TPGSVEEAEE…GCSATFSVLK (91 aa)) is necessary for interaction with KIF5A. A compositionally biased stretch (acidic residues) spans 276–286 (EEAEEAEPDEE). The interval 286 to 292 (EFKDAIE) is necessary for interaction with VAPA. An FYVE-type zinc finger spans residues 344 to 410 (TNNFGNCTGC…VCASCNQTLS (67 aa)). Residues Cys350, Cys353, Cys366, Cys369, Cys374, Cys377, Cys402, and Cys405 each coordinate Zn(2+).

Can form homooligomers (monomers, dimers and tetramers). Interacts with RAB11A (GDP-bound form); regulates RAB11A. Interacts with FKBP8; may negatively regulate ZFYVE27 phosphorylation. Interacts with VAPA (via MSP domain); may regulate ZFYVE27 retention in the endoplasmic reticulum and its function in cell projections formation. Interacts with VAPB (via MSP domain). Interacts with RAB11B (GDP-bound form), REEP1, REEP5, ATL1, ATL2, ATL3, SPAST, SURF4, KIF5A, KIF5B, KIF5C and RTN3. In terms of processing, phosphorylated. Phosphorylation is induced by NGF through the MAPK/ERK pathway and modulates interaction with RAB11A.

The protein localises to the recycling endosome membrane. Its subcellular location is the endoplasmic reticulum membrane. It localises to the cell projection. It is found in the growth cone membrane. In terms of biological role, key regulator of RAB11-dependent vesicular trafficking during neurite extension through polarized membrane transport. Promotes axonal elongation and contributes to the establishment of neuronal cell polarity. Involved in nerve growth factor-induced neurite formation in VAPA-dependent manner. Contributes to both the formation and stabilization of the tubular ER network. Involved in ER morphogenesis by regulating the sheet-to-tubule balance and possibly the density of tubule interconnections. Acts as an adapter protein that facilitates the interaction of KIF5A with VAPA, VAPB, SURF4, RAB11A, RAB11B and RTN3 and the ZFYVE27-KIF5A complex contributes to the transport of these proteins in neurons. Can induce formation of neurite-like membrane protrusions in non-neuronal cells in a KIF5A/B-dependent manner. The protein is Protrudin (ZFYVE27) of Pongo abelii (Sumatran orangutan).